A 401-amino-acid polypeptide reads, in one-letter code: Large ribosomal subunit protein uL3 (401 aa).

The tract at residues 1 to 21 is disordered; sequence MSHRKFSAPRHGHMGFTPKKR.

This sequence belongs to the universal ribosomal protein uL3 family.

The protein resides in the cytoplasm. Its function is as follows. The L3 protein is a component of the large subunit of cytoplasmic ribosomes. The protein is Large ribosomal subunit protein uL3 (rpl-3) of Caenorhabditis briggsae.